A 558-amino-acid polypeptide reads, in one-letter code: Aurovertin biosynthesis cluster transcription factor aurF (558 aa).

The protein belongs to the POU transcription factor family. Class-3 subfamily.

The protein localises to the nucleus. Transcription factor that regulates the expression of the gene cluster that mediates the biosynthesis of aurovertins, fungal polyketides that exhibit potent inhibition of adenosine triphosphate synthase. The polypeptide is Aurovertin biosynthesis cluster transcription factor aurF (Calcarisporium arbuscula (Dendryphion arbuscula)).